A 1213-amino-acid chain; its full sequence is Filamin-A-interacting protein 1 (1213 aa).

The segment at 1–70 is disordered; that stretch reads MRSRNQGGES…TSGECERKTK (70 aa). The span at 61–70 shows a compositional bias: basic and acidic residues; sequence TSGECERKTK. Position 138 is a phosphoserine (serine 138). Coiled coils occupy residues 192–591 and 624–781; these read DYMN…ELSC and PEDN…LSKR. Disordered stretches follow at residues 878 to 900 and 949 to 976; these read NGPSITQEKGPRTNSSPGHPGEV and KPRITIIPSPNVMPQKQKSGDTTLGPER. 2 stretches are compositionally biased toward polar residues: residues 880–894 and 960–970; these read PSITQEKGPRTNSSP and VMPQKQKSGDT. Residue serine 979 is modified to Phosphoserine. The tract at residues 1103–1213 is disordered; it reads VSTGTVLRSP…STTSLGGGKG (111 aa). Positions 1125–1138 are enriched in low complexity; it reads VTSTITITPVTTSS. The segment covering 1139-1156 has biased composition (polar residues); it reads ARGTQSVSGQDGSSQRPT. The span at 1168 to 1179 shows a compositional bias: low complexity; the sequence is AGKPVVAAPGAG.

Belongs to the FILIP1 family. Interacts with FLNA. Interacts with RHOD (in GTP-bound form). Moderately expressed in adult heart and brain. Weakly expressed in lung, skeletal muscle, ovary, testis, kidney, and fetal brain, and hardly detectable in liver, pancreas, spleen, and fetal liver. Within brain, moderate expression is found in amygdala and caudate nucleus. Expressed in skin fibroblasts.

The protein resides in the cytoplasm. It localises to the cytoskeleton. In terms of biological role, by acting through a filamin-A/F-actin axis, it controls the start of neocortical cell migration from the ventricular zone. May be able to induce the degradation of filamin-A. The protein is Filamin-A-interacting protein 1 (FILIP1) of Homo sapiens (Human).